The following is a 162-amino-acid chain: Protein FAM162B (162 aa).

The segment at 26-69 (EATRRPAPALPPRGLPCYSSGGAPSNSGPQGHGEIHRVPTQRRP) is disordered. Residues 107 to 127 (VKACYIMIGLTIIACFAVIVS) form a helical membrane-spanning segment.

Belongs to the UPF0389 family.

Its subcellular location is the membrane. The sequence is that of Protein FAM162B (FAM162B) from Homo sapiens (Human).